The primary structure comprises 430 residues: Ethylene-responsive transcription factor WRI1 (430 aa).

Residues 1–26 are compositionally biased toward low complexity; it reads MKKRLTTSTCSSSPSSSVSSSTTTSS. Residues 1–66 form a disordered region; that stretch reads MKKRLTTSTC…PASTRRSSIY (66 aa). The span at 53 to 63 shows a compositional bias: polar residues; the sequence is NPTSPASTRRS. Positions 65 to 131 form a DNA-binding region, AP2/ERF 1; that stretch reads IYRGVTRHRW…WGPDTILNFP (67 aa). Position 70 is a phosphothreonine; by KIN10 (T70). Residue S166 is modified to Phosphoserine; by KIN10. Positions 167-225 form a DNA-binding region, AP2/ERF 2; that stretch reads KYRGVARHHHNGRWEARIGRVFGNKYLYLGTYNTQEEAAAAYDMAAIEYRGANAVTNFD. Over residues 260 to 274 the composition is skewed to basic and acidic residues; that stretch reads VETREAKEEPREEVK. Disordered regions lie at residues 260-297 and 398-422; these read VETR…EQQE and SPPS…TTTT.

It belongs to the AP2/ERF transcription factor family. AP2 subfamily. In terms of assembly, interacts with KIN10 and KIN11. Post-translationally, ubiquitinated. The phosphorylation at Thr-70 and Ser-166 by KIN10 facilitates its degradation via the proteasomal pathway. In terms of tissue distribution, mostly expressed in siliques, especially in seeds. Also detected in roots and flowers, and, to a lower extent, in leaves stems and seedlings.

Its subcellular location is the nucleus. Its activity is regulated as follows. Down-regulated by KIN10 that controls its protein stability under a phosphorylation-dependent manner. In terms of biological role, may be involved in the regulation of gene expression by stress factors and by components of stress signal transduction pathways. Transcriptional activator involved in the activation of a subset of sugar-responsive genes and the control of carbon flow from sucrose import to oil accumulation in developing seeds. Binds to the GCC-box pathogenesis-related promoter element. Promotes sugar uptake and seed oil accumulation by glycolysis. Required for embryo development, seed germination and, indirectly, for seedling establishment. Negative regulator of the ABA-mediated germination inhibition. The sequence is that of Ethylene-responsive transcription factor WRI1 (WRI1) from Arabidopsis thaliana (Mouse-ear cress).